The primary structure comprises 161 residues: Nucleotide-binding protein PFL_4775 (161 aa).

The protein belongs to the YajQ family.

Nucleotide-binding protein. The sequence is that of Nucleotide-binding protein PFL_4775 from Pseudomonas fluorescens (strain ATCC BAA-477 / NRRL B-23932 / Pf-5).